We begin with the raw amino-acid sequence, 354 residues long: Maleylacetate reductase 1 (354 aa).

It belongs to the iron-containing alcohol dehydrogenase family. Homodimer.

The catalysed reaction is 3-oxoadipate + NAD(+) = maleylacetate + NADH + H(+). It catalyses the reaction 3-oxoadipate + NADP(+) = maleylacetate + NADPH + H(+). It participates in aromatic compound metabolism; 3-chlorocatechol degradation. This is Maleylacetate reductase 1 (tfdFI) from Cupriavidus pinatubonensis (strain JMP 134 / LMG 1197) (Cupriavidus necator (strain JMP 134)).